Here is a 201-residue protein sequence, read N- to C-terminus: Histidinol dehydrogenase (201 aa).

The protein belongs to the histidinol dehydrogenase family. Homodimer. Requires Zn(2+) as cofactor.

It catalyses the reaction L-histidinol + 2 NAD(+) + H2O = L-histidine + 2 NADH + 3 H(+). The protein operates within amino-acid biosynthesis; L-histidine biosynthesis; L-histidine from 5-phospho-alpha-D-ribose 1-diphosphate: step 9/9. Functionally, catalyzes the sequential NAD-dependent oxidations of L-histidinol to L-histidinaldehyde and then to L-histidine. This Buchnera aphidicola subsp. Melaphis rhois protein is Histidinol dehydrogenase (hisD).